A 233-amino-acid chain; its full sequence is Gamma-interferon-responsive lysosomal thiol protein (233 aa).

Residues 1–26 (MVSSSLTKLVFFGCLLLLTFTDNLVA) form the signal peptide. A disulfide bridge links Cys-42 with Cys-45. Asn-80 and Asn-207 each carry an N-linked (GlcNAc...) asparagine glycan. Positions 200 to 233 (TTLPKVCNSSASMSKSPERKWKLQVSYANKATNY) are cleaved as a propeptide — removed in mature form.

The protein belongs to the GILT family. In terms of assembly, dimer; disulfide-linked. As to expression, expressed in the outer integument of seed coat.

Its subcellular location is the secreted. The protein localises to the lysosome. Functionally, lysosomal thiol reductase that can reduce protein disulfide bonds. May facilitate the complete unfolding of proteins destined for lysosomal degradation. The sequence is that of Gamma-interferon-responsive lysosomal thiol protein from Arabidopsis thaliana (Mouse-ear cress).